We begin with the raw amino-acid sequence, 182 residues long: Ribosome-recycling factor (182 aa).

A disordered region spans residues 137–158 (KKSEKESEISEDQSRDEQDNVQ).

It belongs to the RRF family.

The protein resides in the cytoplasm. Its function is as follows. Responsible for the release of ribosomes from messenger RNA at the termination of protein biosynthesis. May increase the efficiency of translation by recycling ribosomes from one round of translation to another. The sequence is that of Ribosome-recycling factor from Prochlorococcus marinus (strain MIT 9211).